A 235-amino-acid polypeptide reads, in one-letter code: Uridylate kinase (235 aa).

Position 10–13 (10–13 (KLSG)) interacts with ATP. Residue G52 coordinates UMP. Residues G53 and R57 each coordinate ATP. UMP contacts are provided by residues D72 and 133-140 (TSNPYFST). ATP is bound by residues T160, Y166, and D169.

It belongs to the UMP kinase family. As to quaternary structure, homohexamer.

Its subcellular location is the cytoplasm. It catalyses the reaction UMP + ATP = UDP + ADP. Its pathway is pyrimidine metabolism; CTP biosynthesis via de novo pathway; UDP from UMP (UMPK route): step 1/1. With respect to regulation, inhibited by UTP. Functionally, catalyzes the reversible phosphorylation of UMP to UDP. The chain is Uridylate kinase from Solibacter usitatus (strain Ellin6076).